A 276-amino-acid polypeptide reads, in one-letter code: Apulose-4-phosphate transketolase subunit A (276 aa).

Belongs to the transketolase family. Probable heterodimer composed of AptA and AptB. It depends on thiamine diphosphate as a cofactor.

The catalysed reaction is apulose 4-phosphate + D-glyceraldehyde 3-phosphate = D-xylulose 5-phosphate + dihydroxyacetone phosphate. The protein operates within carbohydrate metabolism. In terms of biological role, involved in catabolism of D-apiose. Catalyzes the transfer of the glycolaldehyde group from apulose-4-phosphate to D-glyceraldehyde 3-phosphate, generating dihydroxyacetone phosphate and D-xylulose-5-phosphate. This is Apulose-4-phosphate transketolase subunit A from Actinobacillus succinogenes (strain ATCC 55618 / DSM 22257 / CCUG 43843 / 130Z).